The following is a 164-amino-acid chain: V-type proton ATPase 16 kDa proteolipid subunit (164 aa).

The Lumenal portion of the chain corresponds to 1–9; the sequence is MSNFAGDET. The chain crosses the membrane as a helical span at residues 10-32; it reads APFFGFLGAAAALVFSCMGAAYG. The Cytoplasmic segment spans residues 33–54; it reads TAKSGVGVASMGVMRPELVMKS. Residues 55–75 form a helical membrane-spanning segment; that stretch reads IVPVVMAGVLGIYGLIIAVII. The Lumenal portion of the chain corresponds to 76–94; sequence STGINPKTKSYYLFDGYAH. The helical transmembrane segment at 95 to 116 threads the bilayer; sequence LSSGLACGLAGLSAGMAIGIVG. Topologically, residues 117 to 128 are cytoplasmic; sequence DAGVRANAQQPK. The helical transmembrane segment at 129–154 threads the bilayer; it reads LFVGMILILIFAEALALYGLIVGIIL. Residues 155–164 lie on the Lumenal side of the membrane; it reads SSRAGQSRAE.

The protein belongs to the V-ATPase proteolipid subunit family. As to quaternary structure, V-ATPase is a heteromultimeric enzyme composed of a peripheral catalytic V1 complex (main components: subunits A, B, C, D, E, and F) attached to an integral membrane V0 proton pore complex (main component: the proteolipid protein; which is present as a hexamer that forms the proton-conducting pore).

The protein resides in the vacuole membrane. Its function is as follows. Proton-conducting pore forming subunit of the membrane integral V0 complex of vacuolar ATPase. V-ATPase is responsible for acidifying a variety of intracellular compartments in eukaryotic cells. This Solanum lycopersicum (Tomato) protein is V-type proton ATPase 16 kDa proteolipid subunit.